The primary structure comprises 250 residues: 5-oxoprolinase subunit A (250 aa).

Belongs to the LamB/PxpA family. As to quaternary structure, forms a complex composed of PxpA, PxpB and PxpC.

It catalyses the reaction 5-oxo-L-proline + ATP + 2 H2O = L-glutamate + ADP + phosphate + H(+). Its function is as follows. Catalyzes the cleavage of 5-oxoproline to form L-glutamate coupled to the hydrolysis of ATP to ADP and inorganic phosphate. The polypeptide is 5-oxoprolinase subunit A (Chromohalobacter salexigens (strain ATCC BAA-138 / DSM 3043 / CIP 106854 / NCIMB 13768 / 1H11)).